Consider the following 489-residue polypeptide: Cobyric acid synthase (489 aa).

The GATase cobBQ-type domain occupies 247–439 (ALKVVVPVLP…IHGVFDEPAA (193 aa)). Cys328 acts as the Nucleophile in catalysis. Residue His431 is part of the active site.

Belongs to the CobB/CobQ family. CobQ subfamily.

It participates in cofactor biosynthesis; adenosylcobalamin biosynthesis. Catalyzes amidations at positions B, D, E, and G on adenosylcobyrinic A,C-diamide. NH(2) groups are provided by glutamine, and one molecule of ATP is hydrogenolyzed for each amidation. The polypeptide is Cobyric acid synthase (Marinobacter nauticus (strain ATCC 700491 / DSM 11845 / VT8) (Marinobacter aquaeolei)).